The chain runs to 212 residues: Inner membrane-spanning protein YciB (212 aa).

A run of 5 helical transmembrane segments spans residues 49-69, 78-98, 105-125, 150-170, and 178-198; these read APVLLATVVVILATLAQVLYL, TMLWVSLGLVTVMGGATIWFH, WKPSVLYWVMSAAFLLAPIVA, LAWAAFFAGMGVLNIWVAYNF, and FKAFGGMGLMFVFMLAQGLYM.

It belongs to the YciB family.

The protein localises to the cell inner membrane. Its function is as follows. Plays a role in cell envelope biogenesis, maintenance of cell envelope integrity and membrane homeostasis. The protein is Inner membrane-spanning protein YciB of Leptothrix cholodnii (strain ATCC 51168 / LMG 8142 / SP-6) (Leptothrix discophora (strain SP-6)).